The chain runs to 205 residues: Imidazoleglycerol-phosphate dehydratase (205 aa).

The protein belongs to the imidazoleglycerol-phosphate dehydratase family.

The protein localises to the cytoplasm. It catalyses the reaction D-erythro-1-(imidazol-4-yl)glycerol 3-phosphate = 3-(imidazol-4-yl)-2-oxopropyl phosphate + H2O. It participates in amino-acid biosynthesis; L-histidine biosynthesis; L-histidine from 5-phospho-alpha-D-ribose 1-diphosphate: step 6/9. The chain is Imidazoleglycerol-phosphate dehydratase from Chloroflexus aggregans (strain MD-66 / DSM 9485).